The chain runs to 299 residues: ATP synthase gamma chain (299 aa).

The protein belongs to the ATPase gamma chain family. F-type ATPases have 2 components, CF(1) - the catalytic core - and CF(0) - the membrane proton channel. CF(1) has five subunits: alpha(3), beta(3), gamma(1), delta(1), epsilon(1). CF(0) has three main subunits: a, b and c.

It is found in the cell membrane. Its function is as follows. Produces ATP from ADP in the presence of a proton gradient across the membrane. The gamma chain is believed to be important in regulating ATPase activity and the flow of protons through the CF(0) complex. The protein is ATP synthase gamma chain of Leifsonia xyli subsp. xyli (strain CTCB07).